The sequence spans 274 residues: Ribosomal RNA small subunit methyltransferase A (274 aa).

6 residues coordinate S-adenosyl-L-methionine: His15, Leu17, Gly42, Glu64, Asp89, and Asn108.

This sequence belongs to the class I-like SAM-binding methyltransferase superfamily. rRNA adenine N(6)-methyltransferase family. RsmA subfamily.

The protein resides in the cytoplasm. The catalysed reaction is adenosine(1518)/adenosine(1519) in 16S rRNA + 4 S-adenosyl-L-methionine = N(6)-dimethyladenosine(1518)/N(6)-dimethyladenosine(1519) in 16S rRNA + 4 S-adenosyl-L-homocysteine + 4 H(+). In terms of biological role, specifically dimethylates two adjacent adenosines (A1518 and A1519) in the loop of a conserved hairpin near the 3'-end of 16S rRNA in the 30S particle. May play a critical role in biogenesis of 30S subunits. The sequence is that of Ribosomal RNA small subunit methyltransferase A from Prochlorococcus marinus (strain MIT 9301).